A 360-amino-acid chain; its full sequence is Peptide chain release factor 1 (360 aa).

N5-methylglutamine is present on glutamine 235. A disordered region spans residues 284–313 (AKRQQAEASTRRNLLGSGDRSDRNRTYNFP).

The protein belongs to the prokaryotic/mitochondrial release factor family. In terms of processing, methylated by PrmC. Methylation increases the termination efficiency of RF1.

It localises to the cytoplasm. Functionally, peptide chain release factor 1 directs the termination of translation in response to the peptide chain termination codons UAG and UAA. This is Peptide chain release factor 1 from Salmonella arizonae (strain ATCC BAA-731 / CDC346-86 / RSK2980).